We begin with the raw amino-acid sequence, 395 residues long: RNA ligase 1 (395 aa).

3 residues coordinate ATP: Tyr-48, Arg-65, and Lys-83. The active-site N6-AMP-lysine intermediate is the Lys-113. Glu-173, Lys-255, and Lys-257 together coordinate ATP. Asp-285 is a Mg(2+) binding site.

The cofactor is Mg(2+). Requires Mn(2+) as cofactor.

It carries out the reaction ATP + (ribonucleotide)n-3'-hydroxyl + 5'-phospho-(ribonucleotide)m = (ribonucleotide)n+m + AMP + diphosphate.. In terms of biological role, RNA ligase that ligates single-stranded nucleic acids in an ATP-dependent manner. Catalyzes both inter- and intra-molecular single-stranded DNA (ssDNA) ligation to &gt;50% completion in a matter of hours at an elevated temperature, although favoring intra-molecular ligation on RNA and single-stranded DNA substrates. Is able to catalyze the adenylation reaction of ssDNA 3'-terminal phosphate (ssDNA 3'p) to 3'-adenylated DNA (ssDNA 3'pp5'A). Does not have significant 3'-adenylation activity with a 3'-phosphorylated nicked dsDNA substrate. In Thermus scotoductus, this protein is RNA ligase 1.